The following is a 311-amino-acid chain: Tyrosine recombinase XerD (311 aa).

Positions 1 to 83 (MEFIAQFLEM…TIKSYYAFLI (83 aa)) constitute a Core-binding (CB) domain. Residues 104 to 299 (KLPIILSIDQ…HTNHLKKALL (196 aa)) form the Tyr recombinase domain. Residues Arg-145, Lys-176, His-251, Arg-254, and His-277 contribute to the active site. Tyr-286 functions as the O-(3'-phospho-DNA)-tyrosine intermediate in the catalytic mechanism.

Belongs to the 'phage' integrase family. XerD subfamily. Forms a cyclic heterotetrameric complex composed of two molecules of XerC and two molecules of XerD.

It is found in the cytoplasm. Site-specific tyrosine recombinase, which acts by catalyzing the cutting and rejoining of the recombining DNA molecules. The XerC-XerD complex is essential to convert dimers of the bacterial chromosome into monomers to permit their segregation at cell division. It also contributes to the segregational stability of plasmids. This is Tyrosine recombinase XerD from Rickettsia prowazekii (strain Madrid E).